Reading from the N-terminus, the 394-residue chain is Probable acetyl-CoA acyltransferase (394 aa).

The Acyl-thioester intermediate role is filled by C88. Catalysis depends on proton acceptor residues H349 and C378.

It belongs to the thiolase-like superfamily. Thiolase family.

Its subcellular location is the cytoplasm. It carries out the reaction 2 acetyl-CoA = acetoacetyl-CoA + CoA. This chain is Probable acetyl-CoA acyltransferase, found in Staphylococcus epidermidis (strain ATCC 35984 / DSM 28319 / BCRC 17069 / CCUG 31568 / BM 3577 / RP62A).